Reading from the N-terminus, the 497-residue chain is Lysine--tRNA ligase (497 aa).

Mg(2+)-binding residues include glutamate 406 and glutamate 413.

It belongs to the class-II aminoacyl-tRNA synthetase family. Homodimer. The cofactor is Mg(2+).

It is found in the cytoplasm. It carries out the reaction tRNA(Lys) + L-lysine + ATP = L-lysyl-tRNA(Lys) + AMP + diphosphate. This chain is Lysine--tRNA ligase, found in Rhizobium leguminosarum bv. trifolii (strain WSM2304).